We begin with the raw amino-acid sequence, 371 residues long: Neuropeptide S receptor (371 aa).

The Extracellular portion of the chain corresponds to methionine 1–glutamine 52. Residues asparagine 4 and asparagine 13 are each glycosylated (N-linked (GlcNAc...) asparagine). A helical transmembrane segment spans residues leucine 53–serine 73. At threonine 74–arginine 82 the chain is on the cytoplasmic side. The chain crosses the membrane as a helical span at residues methionine 83–leucine 103. At threonine 104–valine 123 the chain is on the extracellular side. A disulfide bond links cysteine 121 and cysteine 197. Residues valine 124 to isoleucine 144 form a helical membrane-spanning segment. The Cytoplasmic portion of the chain corresponds to aspartate 145–lysine 164. A helical membrane pass occupies residues valine 165 to phenylalanine 185. The Extracellular portion of the chain corresponds to glycine 186–threonine 212. The chain crosses the membrane as a helical span at residues isoleucine 213–valine 233. Over isoleucine 234 to tyrosine 275 the chain is Cytoplasmic. A helical membrane pass occupies residues serine 276–leucine 296. Residues aspartate 297–serine 312 lie on the Extracellular side of the membrane. The helical transmembrane segment at valine 313–phenylalanine 333 threads the bilayer. The Cytoplasmic segment spans residues serine 334–isoleucine 371.

This sequence belongs to the G-protein coupled receptor 1 family. Vasopressin/oxytocin receptor subfamily.

The protein resides in the cell membrane. G-protein coupled receptor for neuropeptide S (NPS). Promotes mobilization of intracellular Ca(2+) stores. Inhibits cell growth in response to NPS binding. Involved in pathogenesis of asthma and other IgE-mediated diseases. In Macaca mulatta (Rhesus macaque), this protein is Neuropeptide S receptor (NPSR1).